A 309-amino-acid polypeptide reads, in one-letter code: uncharacterized protein (309 aa).

Solcar repeat units follow at residues 6 to 83 (SDLY…LCHS), 97 to 211 (LTGY…FKRL), and 216 to 302 (NDKA…VSLL). The next 6 helical transmembrane spans lie at 12–32 (ITAG…FEYL), 47–67 (IILP…VAAF), 100–120 (YNLL…IIPF), 184–204 (VQGT…QFTA), 222–242 (VITG…IDVV), and 285–305 (VGIS…LLGF).

Belongs to the mitochondrial carrier (TC 2.A.29) family.

It is found in the mitochondrion inner membrane. This is an uncharacterized protein from Saccharomyces cerevisiae (strain ATCC 204508 / S288c) (Baker's yeast).